The following is a 447-amino-acid chain: GTPase Era, mitochondrial (447 aa).

A mitochondrion-targeting transit peptide spans 1-18 (MTLRSCETFLRRSLRFST). The region spanning 109–340 (KSLKVAIVGS…RYLFVAAKPC (232 aa)) is the Era-type G domain. Positions 117 to 124 (GSPNAGKS) are G1. 117–124 (GSPNAGKS) provides a ligand contact to GTP. Residues 143-147 (HTTRS) form a G2 region. Residues 164 to 167 (DTPG) are G3. GTP is bound by residues 164–168 (DTPGL) and 233–236 (NKVD). Positions 233–236 (NKVD) are G4. A G5 region spans residues 318-320 (LSS). The region spanning 370–447 (LPKEVPYTMT…RLKISVKLRK (78 aa)) is the KH type-2 domain.

It belongs to the TRAFAC class TrmE-Era-EngA-EngB-Septin-like GTPase superfamily. Era GTPase family.

Its subcellular location is the mitochondrion matrix. It localises to the mitochondrion inner membrane. Its function is as follows. Probable GTPase that plays a role in the mitochondrial ribosomal small subunit assembly. Specifically binds the 12S mitochondrial rRNA (12S mt-rRNA) to a 33 nucleotide section delineating the 3' terminal stem-loop region. May act as a chaperone that protects the 12S mt-rRNA on the 28S mitoribosomal subunit during ribosomal small subunit assembly. This Danio rerio (Zebrafish) protein is GTPase Era, mitochondrial (eral1).